Reading from the N-terminus, the 342-residue chain is Probable RNA methyltransferase PST_2231 (342 aa).

The Proton acceptor role is filled by glutamate 91. Residues 94–320 (LLPRDGLCVS…TKVRNSAGQD (227 aa)) enclose the Radical SAM core domain. A disulfide bridge connects residues cysteine 101 and cysteine 325. Cysteine 108, cysteine 112, and cysteine 115 together coordinate [4Fe-4S] cluster. Residues 153–154 (GE), serine 183, 206–208 (SLH), and asparagine 282 each bind S-adenosyl-L-methionine. Cysteine 325 serves as the catalytic S-methylcysteine intermediate.

Belongs to the radical SAM superfamily. RlmN family. The cofactor is [4Fe-4S] cluster.

The protein resides in the cytoplasm. This Stutzerimonas stutzeri (strain A1501) (Pseudomonas stutzeri) protein is Probable RNA methyltransferase PST_2231.